A 349-amino-acid chain; its full sequence is NADH-quinone oxidoreductase subunit H (349 aa).

The next 8 helical transmembrane spans lie at 19–39 (VWTL…VAYL), 88–108 (GLFI…WAVV), 123–143 (LLFL…AGWA), 161–181 (VSYE…SASL), 202–222 (FLSW…ISGI), 249–269 (GMAF…VSIL), 284–304 (FLPD…FVFL), and 325–345 (VFIP…MSPL).

This sequence belongs to the complex I subunit 1 family. As to quaternary structure, NDH-1 is composed of 14 different subunits. Subunits NuoA, H, J, K, L, M, N constitute the membrane sector of the complex.

Its subcellular location is the cell inner membrane. It catalyses the reaction a quinone + NADH + 5 H(+)(in) = a quinol + NAD(+) + 4 H(+)(out). Its function is as follows. NDH-1 shuttles electrons from NADH, via FMN and iron-sulfur (Fe-S) centers, to quinones in the respiratory chain. The immediate electron acceptor for the enzyme in this species is believed to be ubiquinone. Couples the redox reaction to proton translocation (for every two electrons transferred, four hydrogen ions are translocated across the cytoplasmic membrane), and thus conserves the redox energy in a proton gradient. This subunit may bind ubiquinone. The protein is NADH-quinone oxidoreductase subunit H of Aromatoleum aromaticum (strain DSM 19018 / LMG 30748 / EbN1) (Azoarcus sp. (strain EbN1)).